We begin with the raw amino-acid sequence, 125 residues long: Small ribosomal subunit protein uS12m (125 aa).

Residues 1-27 (MPTKNQLIRHGREEKRRTDRTRALDQC) are disordered. The segment covering 10–23 (HGREEKRRTDRTRA) has biased composition (basic and acidic residues).

Belongs to the universal ribosomal protein uS12 family.

It is found in the mitochondrion. In terms of biological role, protein S12 is involved in the translation initiation step. The polypeptide is Small ribosomal subunit protein uS12m (RPS12) (Triticum aestivum (Wheat)).